Consider the following 485-residue polypeptide: MEYKLLIGLEVHVQLGLKTKAFCGCKNDFGGIPNSRVCPICLGLPGALPSVNKELVSSAILAGHATNSTIRNIVKFDRKHYAYPDLPKGYQISQNDEPICENGFIFIKTSLGVKRINIARIHMEEDSGKSLHLLSNDNQSYIDFNRAGAPLLEIVSQPDIRSGEEAVAYLNALREIFRYLDLSECSMENGSFRCDVNINLLINENDVNYKTPISEIKNLNSFKSVKLAIDYEESKQKEEWILYRKTLESVGKCTMGFDDKKGITVLQRSKETISDYRYIKDPDLPLIKLESDYIENIKSHRMVELPFDARIRLQEQYGLSDFDVVTLTSDKNLVKYFEEAALTSSEPKKVANWILSEVLSVLNEREIGILDFNLPASYIGELVEFILNGKISGKISKEIFLEMVDRNVSSITIINEKKLEQISDKSFIESIVIEVLNENPKSIELYKKGKSHAVKFMMGQIMRKTSGKVNPVLSNEILMNKLQDV.

The protein belongs to the GatB/GatE family. GatB subfamily. As to quaternary structure, heterotrimer of A, B and C subunits.

The enzyme catalyses L-glutamyl-tRNA(Gln) + L-glutamine + ATP + H2O = L-glutaminyl-tRNA(Gln) + L-glutamate + ADP + phosphate + H(+). It carries out the reaction L-aspartyl-tRNA(Asn) + L-glutamine + ATP + H2O = L-asparaginyl-tRNA(Asn) + L-glutamate + ADP + phosphate + 2 H(+). Its function is as follows. Allows the formation of correctly charged Asn-tRNA(Asn) or Gln-tRNA(Gln) through the transamidation of misacylated Asp-tRNA(Asn) or Glu-tRNA(Gln) in organisms which lack either or both of asparaginyl-tRNA or glutaminyl-tRNA synthetases. The reaction takes place in the presence of glutamine and ATP through an activated phospho-Asp-tRNA(Asn) or phospho-Glu-tRNA(Gln). The protein is Aspartyl/glutamyl-tRNA(Asn/Gln) amidotransferase subunit B of Borrelia duttonii (strain Ly).